The following is a 208-amino-acid chain: Uracil phosphoribosyltransferase (208 aa).

5-phospho-alpha-D-ribose 1-diphosphate is bound by residues Arg78, Arg103, and 130–138 (DPMLATGGS). Uracil contacts are provided by residues Ile193 and 198 to 200 (GDA). Position 199 (Asp199) interacts with 5-phospho-alpha-D-ribose 1-diphosphate.

It belongs to the UPRTase family. Mg(2+) serves as cofactor.

The catalysed reaction is UMP + diphosphate = 5-phospho-alpha-D-ribose 1-diphosphate + uracil. The protein operates within pyrimidine metabolism; UMP biosynthesis via salvage pathway; UMP from uracil: step 1/1. With respect to regulation, allosterically activated by GTP. Catalyzes the conversion of uracil and 5-phospho-alpha-D-ribose 1-diphosphate (PRPP) to UMP and diphosphate. This chain is Uracil phosphoribosyltransferase, found in Photobacterium profundum (strain SS9).